Reading from the N-terminus, the 310-residue chain is Glutaminase 1 (310 aa).

The substrate site is built by serine 66, asparagine 117, glutamate 161, asparagine 168, tyrosine 192, tyrosine 244, and valine 262. Lysine 294 is subject to N6-acetyllysine.

The protein belongs to the glutaminase family. As to quaternary structure, homotetramer.

The catalysed reaction is L-glutamine + H2O = L-glutamate + NH4(+). The sequence is that of Glutaminase 1 from Escherichia coli O157:H7.